Here is a 276-residue protein sequence, read N- to C-terminus: Large ribosomal subunit protein uL2 (276 aa).

Disordered regions lie at residues 1–60 (MSIK…RHKR) and 226–276 (NAVD…KRNQ). A compositionally biased stretch (basic and acidic residues) spans 20–31 (SKEEITREEPEK). Basic residues-rich tracts occupy residues 50 to 60 (STRRQGGRHKR) and 258 to 276 (KTRR…KRNQ).

The protein belongs to the universal ribosomal protein uL2 family. In terms of assembly, part of the 50S ribosomal subunit. Forms a bridge to the 30S subunit in the 70S ribosome.

Its function is as follows. One of the primary rRNA binding proteins. Required for association of the 30S and 50S subunits to form the 70S ribosome, for tRNA binding and peptide bond formation. It has been suggested to have peptidyltransferase activity; this is somewhat controversial. Makes several contacts with the 16S rRNA in the 70S ribosome. This chain is Large ribosomal subunit protein uL2, found in Natranaerobius thermophilus (strain ATCC BAA-1301 / DSM 18059 / JW/NM-WN-LF).